The primary structure comprises 412 residues: Glutamate dehydrogenase (412 aa).

The active site involves Lys-102.

Belongs to the Glu/Leu/Phe/Val dehydrogenases family. In roots, stems, leaves and flowers but not in fruits.

Its subcellular location is the mitochondrion matrix. The catalysed reaction is L-glutamate + NAD(+) + H2O = 2-oxoglutarate + NH4(+) + NADH + H(+). The enzyme catalyses L-glutamate + NADP(+) + H2O = 2-oxoglutarate + NH4(+) + NADPH + H(+). The chain is Glutamate dehydrogenase (GDH1) from Solanum lycopersicum (Tomato).